A 143-amino-acid polypeptide reads, in one-letter code: Histone H2B (143 aa).

Residues 1 to 52 (MAPKPASTAGKAPASTASKAPVKSDAAKTASKSKVSSGADGEKKKRKKTRKE) form a disordered region. An N6-acetyllysine; alternate modification is found at K11. A Glycyl lysine isopeptide (Lys-Gly) (interchain with G-Cter in SUMO); alternate cross-link involves residue K11. S15 carries the post-translational modification Phosphoserine. An N6-acetyllysine modification is found at K19. A compositionally biased stretch (low complexity) spans 23–39 (KSDAAKTASKSKVSSGA). Residue K137 forms a Glycyl lysine isopeptide (Lys-Gly) (interchain with G-Cter in ubiquitin) linkage.

It belongs to the histone H2B family. In terms of assembly, the nucleosome is a histone octamer containing two molecules each of H2A, H2B, H3 and H4 assembled in one H3-H4 heterotetramer and two H2A-H2B heterodimers. The octamer wraps approximately 147 bp of DNA. In terms of processing, monoubiquitinated to form H2BK123ub1. H2BK123ub1 gives a specific tag for epigenetic transcriptional activation and is also prerequisite for H3K4me and H3K79me formation. H2BK123ub1 also modulates the formation of double-strand breaks during meiosis and is a prerequisite for DNA-damage checkpoint activation. Post-translationally, phosphorylated to form H2BS10ph during progression through meiotic prophase. May be correlated with chromosome condensation. Acetylation of N-terminal lysines and particularly formation of H2BK11ac has a positive effect on transcription. In terms of processing, sumoylation to form H2BK6su occurs preferentially near the telomeres and represses gene transcription.

The protein localises to the nucleus. It is found in the chromosome. In terms of biological role, core component of nucleosome. Nucleosomes wrap and compact DNA into chromatin, limiting DNA accessibility to the cellular machineries which require DNA as a template. Histones thereby play a central role in transcription regulation, DNA repair, DNA replication and chromosomal stability. DNA accessibility is regulated via a complex set of post-translational modifications of histones, also called histone code, and nucleosome remodeling. This chain is Histone H2B (htbA), found in Agaricus bisporus (White button mushroom).